A 684-amino-acid chain; its full sequence is Putative glucan endo-1,3-beta-glucosidase btgC (684 aa).

Polar residues predominate over residues 1–10 (MAGVNRSFSY). 3 disordered regions span residues 1–38 (MAGVNRSFSYSRGDDALLRDDEREISPLRSAEDGLYST), 124–143 (AERDFNTTGSDNPYIPAPPD), and 157–182 (DSYSSHTGLGAGAPFAEHSTPGTTPS). Residues 1–302 (MAGVNRSFSY…HIIGGGSRKR (302 aa)) lie on the Cytoplasmic side of the membrane. Positions 12-32 (RGDDALLRDDEREISPLRSAE) are enriched in basic and acidic residues. A helical; Signal-anchor for type II membrane protein transmembrane segment spans residues 303–323 (GWIVGLILAAVIVAAIVGGAV). At 324-684 (GGILGHQEHD…IPDCGGKTIT (361 aa)) the chain is on the extracellular side. A disordered region spans residues 330–358 (QEHDGDTSSSSSSSSSSGTGSGGSDKGDG). The segment covering 336 to 347 (TSSSSSSSSSSG) has biased composition (low complexity). N-linked (GlcNAc...) asparagine glycosylation is found at N404, N427, N455, and N474. E487 serves as the catalytic Proton donor. The active-site Nucleophile is the E586. N631 carries N-linked (GlcNAc...) asparagine glycosylation.

Belongs to the glycosyl hydrolase 17 family.

It is found in the cell membrane. The enzyme catalyses Hydrolysis of (1-&gt;3)-beta-D-glucosidic linkages in (1-&gt;3)-beta-D-glucans.. In terms of biological role, glucanases play a role in cell expansion during growth, in cell-cell fusion during mating, and in spore release during sporulation. This enzyme may be involved in beta-glucan degradation. Active on laminarin and lichenan. This Aspergillus niger (strain ATCC MYA-4892 / CBS 513.88 / FGSC A1513) protein is Putative glucan endo-1,3-beta-glucosidase btgC (btgC).